A 227-amino-acid chain; its full sequence is MNSIEFPLLDQIAQNSVISTTSNDLSNWSRLSSLWPLLYGTSCCFIEFASLIGSRFDFDRYGLVPRASPRQADLILTAGTVTMKMAPSLLRLYEQMPEPKYVIAMGACTITGGMFSTDSYSTVRGVDKLIPVDVYLPGCPPKPEAVIDAITKLRKKISREIYEDRIKSQPKNRCFTINHKFRVGRSIHTGNYDQALLYKYKSPSTSEIPPETFFKYKNAASSRELVN.

[4Fe-4S] cluster contacts are provided by C43, C44, C108, and C139.

Belongs to the complex I 20 kDa subunit family. NDH is composed of at least 16 different subunits, 5 of which are encoded in the nucleus. [4Fe-4S] cluster serves as cofactor.

Its subcellular location is the plastid. The protein localises to the chloroplast thylakoid membrane. The enzyme catalyses a plastoquinone + NADH + (n+1) H(+)(in) = a plastoquinol + NAD(+) + n H(+)(out). The catalysed reaction is a plastoquinone + NADPH + (n+1) H(+)(in) = a plastoquinol + NADP(+) + n H(+)(out). Functionally, NDH shuttles electrons from NAD(P)H:plastoquinone, via FMN and iron-sulfur (Fe-S) centers, to quinones in the photosynthetic chain and possibly in a chloroplast respiratory chain. The immediate electron acceptor for the enzyme in this species is believed to be plastoquinone. Couples the redox reaction to proton translocation, and thus conserves the redox energy in a proton gradient. This is NAD(P)H-quinone oxidoreductase subunit K, chloroplastic from Spinacia oleracea (Spinach).